A 67-amino-acid polypeptide reads, in one-letter code: Nigrocin-2GRc (67 aa).

The N-terminal stretch at methionine 1 to cysteine 22 is a signal peptide. The propeptide occupies glutamate 23–arginine 46. Residues cysteine 61 and cysteine 67 are joined by a disulfide bond.

In terms of tissue distribution, expressed by the skin glands.

It is found in the secreted. Antimicrobial peptide active at least against the Gram-positive bacterium S.aureus but with otherwise unclear activity spectrum. Lacks hemolytic activity against rabbit or human erythrocytes. In Odorrana grahami (Yunnanfu frog), this protein is Nigrocin-2GRc.